Reading from the N-terminus, the 147-residue chain is Protein archease (147 aa).

Residues D17, D146, and I147 each contribute to the Ca(2+) site.

It belongs to the archease family.

Functionally, activates the tRNA-splicing ligase complex by facilitating the enzymatic turnover of catalytic subunit RtcB. Acts by promoting the guanylylation of RtcB, a key intermediate step in tRNA ligation. Can also alter the NTP specificity of RtcB such that ATP, dGTP or ITP is used efficiently. This chain is Protein archease, found in Pyrobaculum calidifontis (strain DSM 21063 / JCM 11548 / VA1).